The primary structure comprises 324 residues: Biotin synthase (324 aa).

Positions 37–264 (NEVQVAALMN…ASYVRLAAGR (228 aa)) constitute a Radical SAM core domain. Residues C52, C56, and C59 each coordinate [4Fe-4S] cluster. [2Fe-2S] cluster contacts are provided by C96, C127, C187, and R259.

This sequence belongs to the radical SAM superfamily. Biotin synthase family. In terms of assembly, homodimer. [4Fe-4S] cluster is required as a cofactor. The cofactor is [2Fe-2S] cluster.

The catalysed reaction is (4R,5S)-dethiobiotin + (sulfur carrier)-SH + 2 reduced [2Fe-2S]-[ferredoxin] + 2 S-adenosyl-L-methionine = (sulfur carrier)-H + biotin + 2 5'-deoxyadenosine + 2 L-methionine + 2 oxidized [2Fe-2S]-[ferredoxin]. It functions in the pathway cofactor biosynthesis; biotin biosynthesis; biotin from 7,8-diaminononanoate: step 2/2. Its function is as follows. Catalyzes the conversion of dethiobiotin (DTB) to biotin by the insertion of a sulfur atom into dethiobiotin via a radical-based mechanism. The chain is Biotin synthase from Anaplasma marginale (strain Florida).